Consider the following 307-residue polypeptide: GTPase Era (307 aa).

Positions 14-184 (HSGFVAIVGK…REQILDILPE (171 aa)) constitute an Era-type G domain. Residues 22–29 (GKPNVGKS) form a G1 region. Position 22-29 (22-29 (GKPNVGKS)) interacts with GTP. Positions 48-52 (QTTRR) are G2. A G3 region spans residues 69–72 (DTPG). Residues 69-73 (DTPGL) and 131-134 (NKTD) each bind GTP. The tract at residues 131 to 134 (NKTD) is G4. The interval 162 to 164 (LSA) is G5. One can recognise a KH type-2 domain in the interval 215-292 (LREELPYAVA…FLGLEVIVIP (78 aa)).

This sequence belongs to the TRAFAC class TrmE-Era-EngA-EngB-Septin-like GTPase superfamily. Era GTPase family. In terms of assembly, monomer.

The protein localises to the cytoplasm. It localises to the cell membrane. In terms of biological role, an essential GTPase that binds both GDP and GTP, with rapid nucleotide exchange. Plays a role in 16S rRNA processing and 30S ribosomal subunit biogenesis and possibly also in cell cycle regulation and energy metabolism. This chain is GTPase Era, found in Deinococcus deserti (strain DSM 17065 / CIP 109153 / LMG 22923 / VCD115).